A 166-amino-acid polypeptide reads, in one-letter code: Urease accessory protein UreE (166 aa).

This sequence belongs to the UreE family.

The protein resides in the cytoplasm. Functionally, involved in urease metallocenter assembly. Binds nickel. Probably functions as a nickel donor during metallocenter assembly. This Pseudomonas fluorescens (strain Pf0-1) protein is Urease accessory protein UreE.